Consider the following 453-residue polypeptide: Kynurenine 3-monooxygenase (453 aa).

This sequence belongs to the aromatic-ring hydroxylase family. KMO subfamily. FAD is required as a cofactor.

The enzyme catalyses L-kynurenine + NADPH + O2 + H(+) = 3-hydroxy-L-kynurenine + NADP(+) + H2O. The protein operates within cofactor biosynthesis; NAD(+) biosynthesis; quinolinate from L-kynurenine: step 1/3. In terms of biological role, catalyzes the hydroxylation of L-kynurenine (L-Kyn) to form 3-hydroxy-L-kynurenine (L-3OHKyn). Required for synthesis of quinolinic acid. The sequence is that of Kynurenine 3-monooxygenase from Salinispora tropica (strain ATCC BAA-916 / DSM 44818 / JCM 13857 / NBRC 105044 / CNB-440).